The sequence spans 121 residues: Small ribosomal subunit protein uS13 (121 aa).

The segment at 94-121 is disordered; it reads GLPVRGQRTRTNARTRKGKRKTVAGKKK.

This sequence belongs to the universal ribosomal protein uS13 family. As to quaternary structure, part of the 30S ribosomal subunit. Forms a loose heterodimer with protein S19. Forms two bridges to the 50S subunit in the 70S ribosome.

In terms of biological role, located at the top of the head of the 30S subunit, it contacts several helices of the 16S rRNA. In the 70S ribosome it contacts the 23S rRNA (bridge B1a) and protein L5 of the 50S subunit (bridge B1b), connecting the 2 subunits; these bridges are implicated in subunit movement. Contacts the tRNAs in the A and P-sites. This Treponema pallidum (strain Nichols) protein is Small ribosomal subunit protein uS13.